The chain runs to 509 residues: Pentatricopeptide repeat-containing protein At2g13420, mitochondrial (509 aa).

The N-terminal 19 residues, 1-19, are a transit peptide targeting the mitochondrion; the sequence is MLLLKQISPPFHLHQLRRR. 8 PPR repeats span residues 172–202, 206–240, 241–285, 286–320, 321–355, 356–390, 391–425, and 426–460; these read RLVE…RKEE, DEKV…GIEP, NVVT…GIEP, DVTS…GISP, TIET…GISP, SSAT…LCKP, STQT…ETGP, and DLDS…GFLP.

The protein belongs to the PPR family. P subfamily.

It is found in the mitochondrion. This chain is Pentatricopeptide repeat-containing protein At2g13420, mitochondrial, found in Arabidopsis thaliana (Mouse-ear cress).